A 512-amino-acid polypeptide reads, in one-letter code: MELLLNPSLFSLLPLLLFIIFLFKRLYTSPTCQRKLPPSPPKLPVIGNLHQVGSLPHRSLRSLSQKYGPLMLLHFGSVPVLVASSAEAACEIMKSHDIVFSTRPKSNISDKLTYGSKDIAFSPYGEYWRRVRSICVNHLLSNQRVKSFRHVIEEETKKMIENINERCVSSSSPVNLSDFTLTLTNSIICTIAFGRKHCDVENMRKIKAMLMGFEEILSVFDAGDYIPWLAWVNRFTGLDAKLKTLAKQGDELVEGVIDAHMKRKKAEAQSYDAADQAKGTDFMDILLDIYQGTVPGFALDRDSVKAIILDMFTAGTDTIYTSIDWTIAELLRHPRVLKKLHTEVRQVAQGKSEITEEDLGKMEYLKVVIKETLRLHPPIPLLLPRESTQEISIMGYHILAGTQVIVNAWAIGRDPLYWENPEEFRPERFMGSDMDFRGFNFEYTPFGAGRRSCPALAFAIAVVELTIAKLVQRFDFALPDEAKPEDLDMTEASGTTVHKQLPIVVNVVATRN.

Residues Leu-3–Phe-23 form a helical membrane-spanning segment. Heme is bound at residue Cys-453.

Belongs to the cytochrome P450 family. Heme serves as cofactor.

Its subcellular location is the membrane. It carries out the reaction norfluorocurarine + reduced [NADPH--hemoprotein reductase] + O2 = 18-hydroxynorfluorocurarine + oxidized [NADPH--hemoprotein reductase] + H2O + H(+). Its pathway is alkaloid biosynthesis. Its function is as follows. Monooxygenase involved in the biosynthesis of curare monoterpene indole alkaloids (MIAs), natural products such as diaboline, a pharmacologically active compound used to regulate blood pressure. Curare alkaloids act as animal glycine receptor antagonists. Catalyzes the conversion of norfluorocurarine to 18-OH norfluorocurarine. The polypeptide is Norfluorocurarine oxidase (Strychnos sp).